Reading from the N-terminus, the 738-residue chain is Vesicle-fusing ATPase (738 aa).

ATP is bound by residues 507–512 and 547–554; these read NGIINY and PGCGKSSL.

It belongs to the AAA ATPase family. As to quaternary structure, interacts with syn7A, snpA and snpC. Mg(2+) is required as a cofactor.

The protein resides in the cytoplasmic vesicle membrane. The protein localises to the endosome membrane. The enzyme catalyses ATP + H2O = ADP + phosphate + H(+). Its function is as follows. Required for vesicle-mediated transport. Involved in endocytosis and endosome-endosome fusion. May be required for transport from the endoplasmic reticulum to the Golgi stack, and for the fusion of transport vesicles within the Golgi cisternae. Required for cell polarity, locomotion and chemotaxis. This Dictyostelium discoideum (Social amoeba) protein is Vesicle-fusing ATPase (nsfA).